Here is a 91-residue protein sequence, read N- to C-terminus: ATP synthase subunit c (91 aa).

Helical transmembrane passes span 4 to 24 (FTMC…GTGI) and 53 to 73 (IGLA…LIIL).

This sequence belongs to the ATPase C chain family. In terms of assembly, F-type ATPases have 2 components, F(1) - the catalytic core - and F(0) - the membrane proton channel. F(1) has five subunits: alpha(3), beta(3), gamma(1), delta(1), epsilon(1). F(0) has three main subunits: a(1), b(2) and c(10-14). The alpha and beta chains form an alternating ring which encloses part of the gamma chain. F(1) is attached to F(0) by a central stalk formed by the gamma and epsilon chains, while a peripheral stalk is formed by the delta and b chains.

The protein resides in the cell inner membrane. Functionally, f(1)F(0) ATP synthase produces ATP from ADP in the presence of a proton or sodium gradient. F-type ATPases consist of two structural domains, F(1) containing the extramembraneous catalytic core and F(0) containing the membrane proton channel, linked together by a central stalk and a peripheral stalk. During catalysis, ATP synthesis in the catalytic domain of F(1) is coupled via a rotary mechanism of the central stalk subunits to proton translocation. Its function is as follows. Key component of the F(0) channel; it plays a direct role in translocation across the membrane. A homomeric c-ring of between 10-14 subunits forms the central stalk rotor element with the F(1) delta and epsilon subunits. The sequence is that of ATP synthase subunit c from Trichlorobacter lovleyi (strain ATCC BAA-1151 / DSM 17278 / SZ) (Geobacter lovleyi).